A 1025-amino-acid chain; its full sequence is Multidrug resistance protein MdtC (1025 aa).

The next 12 membrane-spanning stretches (helical) occupy residues 3–23 (FFAL…AITL), 333–353 (EVEQ…FLFL), 360–380 (IIPA…MYLC), 387–407 (LSLM…IVVL), 431–451 (VGFT…PLLL), 469–489 (VAIG…CGWM), 528–548 (LVGV…ISIP), 853–873 (VILI…LYES), 875–895 (VHPL…LLAL), 897–917 (LFNA…IGIV), 953–973 (PIMM…LSGG), and 984–1004 (ITIV…TPVV).

This sequence belongs to the resistance-nodulation-cell division (RND) (TC 2.A.6) family. MdtC subfamily. Part of a tripartite efflux system composed of MdtA, MdtB and MdtC. MdtC forms a heteromultimer with MdtB.

It is found in the cell inner membrane. Functionally, the MdtABC tripartite complex confers resistance against novobiocin and deoxycholate. The polypeptide is Multidrug resistance protein MdtC (Escherichia coli O9:H4 (strain HS)).